The chain runs to 151 residues: Small ribosomal subunit protein uS15 (151 aa).

This sequence belongs to the universal ribosomal protein uS15 family.

The protein is Small ribosomal subunit protein uS15 (RPS13) of Agaricus bisporus (White button mushroom).